Consider the following 277-residue polypeptide: tRNA pseudouridine synthase A (277 aa).

D51 serves as the catalytic Nucleophile. Residue Y109 participates in substrate binding.

The protein belongs to the tRNA pseudouridine synthase TruA family. As to quaternary structure, homodimer.

The enzyme catalyses uridine(38/39/40) in tRNA = pseudouridine(38/39/40) in tRNA. Formation of pseudouridine at positions 38, 39 and 40 in the anticodon stem and loop of transfer RNAs. This chain is tRNA pseudouridine synthase A, found in Nitrosomonas eutropha (strain DSM 101675 / C91 / Nm57).